Here is a 414-residue protein sequence, read N- to C-terminus: MNIVKRAVPELLRGMTNATPNIGLIKNKVVSFEAVGQLKKSFYKRQLPKQCLAFDSSLGKDVFLRALQEGRMENYFSLAQQMVTQNEPAFCGLGTLCMILNSLKVDPGRLWKGSWRWYDQYMLDCCRSLSDIEKDGVTLEEFSCLANCNGLRTITKCVKDVSFDEFRKDVISCSTIENKIMAISFCRKVLGQTGDGHFSPVGGFSESDNKILILDVARFKYPCYWVDLKLMYESMFPIDKASGQPRGYVLLEPMHIPLGVLTVGLNKYSWRNVSKHILQQAATVKNADNLAEILLSINQSSIPLIQERSNSSKSGDFEHFKECIRSTKTYHLFLKHTNTNVEYITMAFWAIFSLPMIQKALPKGVLEEIQSLLKEVEISEINTQLTALKKQLDSLTHCCKTDTGCCSSSCCKNT.

Residues 37–256 (QLKKSFYKRQ…GYVLLEPMHI (220 aa)) enclose the Peptidase C83 domain.

Belongs to the phytochelatin synthase family.

It catalyses the reaction [Glu(-Cys)](n)-Gly + glutathione + H(+) = [Glu(-Cys)](n+1)-Gly + glycine. Required for detoxification of heavy metals such as cadmium and arsenate. This Schizosaccharomyces pombe (strain 972 / ATCC 24843) (Fission yeast) protein is Glutathione gamma-glutamylcysteinyltransferase.